The primary structure comprises 332 residues: tRNA-dihydrouridine(20/20a) synthase (332 aa).

FMN is bound by residues P19–L21 and Q71. Catalysis depends on C101, which acts as the Proton donor. Residues K140, H173, N213–G215, and G235–R236 contribute to the FMN site.

It belongs to the Dus family. DusA subfamily. It depends on FMN as a cofactor.

It catalyses the reaction 5,6-dihydrouridine(20) in tRNA + NADP(+) = uridine(20) in tRNA + NADPH + H(+). The enzyme catalyses 5,6-dihydrouridine(20) in tRNA + NAD(+) = uridine(20) in tRNA + NADH + H(+). The catalysed reaction is 5,6-dihydrouridine(20a) in tRNA + NADP(+) = uridine(20a) in tRNA + NADPH + H(+). It carries out the reaction 5,6-dihydrouridine(20a) in tRNA + NAD(+) = uridine(20a) in tRNA + NADH + H(+). Its function is as follows. Catalyzes the synthesis of 5,6-dihydrouridine (D), a modified base found in the D-loop of most tRNAs, via the reduction of the C5-C6 double bond in target uridines. Specifically modifies U20 and U20a in tRNAs. The sequence is that of tRNA-dihydrouridine(20/20a) synthase from Salmonella typhi.